A 425-amino-acid polypeptide reads, in one-letter code: Dual-specificity RNA methyltransferase RlmN (425 aa).

Glutamate 136 (proton acceptor) is an active-site residue. The region spanning 142–381 (GDDRGTLCVS…FTAGYASPVR (240 aa)) is the Radical SAM core domain. Cysteines 149 and 392 form a disulfide. Residues cysteine 156, cysteine 160, and cysteine 163 each coordinate [4Fe-4S] cluster. S-adenosyl-L-methionine is bound by residues 218–219 (GE), serine 250, 272–274 (SLH), and asparagine 349. Catalysis depends on cysteine 392, which acts as the S-methylcysteine intermediate.

It belongs to the radical SAM superfamily. RlmN family. [4Fe-4S] cluster serves as cofactor.

The protein localises to the cytoplasm. It catalyses the reaction adenosine(2503) in 23S rRNA + 2 reduced [2Fe-2S]-[ferredoxin] + 2 S-adenosyl-L-methionine = 2-methyladenosine(2503) in 23S rRNA + 5'-deoxyadenosine + L-methionine + 2 oxidized [2Fe-2S]-[ferredoxin] + S-adenosyl-L-homocysteine. The enzyme catalyses adenosine(37) in tRNA + 2 reduced [2Fe-2S]-[ferredoxin] + 2 S-adenosyl-L-methionine = 2-methyladenosine(37) in tRNA + 5'-deoxyadenosine + L-methionine + 2 oxidized [2Fe-2S]-[ferredoxin] + S-adenosyl-L-homocysteine. In terms of biological role, specifically methylates position 2 of adenine 2503 in 23S rRNA and position 2 of adenine 37 in tRNAs. m2A2503 modification seems to play a crucial role in the proofreading step occurring at the peptidyl transferase center and thus would serve to optimize ribosomal fidelity. The polypeptide is Dual-specificity RNA methyltransferase RlmN (Methylorubrum extorquens (strain PA1) (Methylobacterium extorquens)).